The chain runs to 207 residues: Suppressor of IKBKE 1 (207 aa).

2 coiled-coil regions span residues 70-102 (HILL…DALE) and 164-192 (CKVQ…ESLQ).

It belongs to the SIKE family. In terms of assembly, interacts with IKBKE and TBK1 via its coiled coil region. Interaction with TBK1 is disrupted upon viral infection or TLR3 stimulation. Interacts with CDC42BPB. Interacts with SIKE1 which mediates association with the STRIPAK core complex composed of PP2A catalytic and scaffolding subunits, the striatins (PP2A regulatory subunits), the striatin-associated proteins MOB4, STRIP1 and STRIP2, PDCD10 and members of the STE20 kinases, such as STK24 and STK26.

It is found in the cytoplasm. Functionally, physiological suppressor of IKK-epsilon and TBK1 that plays an inhibitory role in virus- and TLR3-triggered IRF3. Inhibits TLR3-mediated activation of interferon-stimulated response elements (ISRE) and the IFN-beta promoter. May act by disrupting the interactions of IKBKE or TBK1 with TICAM1/TRIF, IRF3 and RIGI. Does not inhibit NF-kappa-B activation pathways. Associates with the striatin-interacting phosphatase and kinase (STRIPAK) core complex, forming the extended (SIKE1:SLMAP)STRIPAK complex. The (SIKE1:SLMAP)STRIPAK complex dephosphorylates STK3 leading to the inhibition of Hippo signaling and the control of cell growth. In Mus musculus (Mouse), this protein is Suppressor of IKBKE 1 (Sike1).